The following is a 550-amino-acid chain: Glycosyltransferase-like protein gnt12 (550 aa).

The disordered stretch occupies residues 1–29 (MSYLPLYNNNNNINNNNNNNNNRINNNKE). Over 1-36 (MSYLPLYNNNNNINNNNNNNNNRINNNKEKGVKNKP) the chain is Cytoplasmic. Residues 8–25 (NNNNNINNNNNNNNNRIN) are compositionally biased toward low complexity. Residues 37 to 57 (FQIFISIVFIVFLCFFLIWSM) form a helical; Signal-anchor for type II membrane protein membrane-spanning segment. Residues 58–550 (EAKKDKNIKI…LFNEPLTNEC (493 aa)) are Extracellular-facing. Over residues 81–97 (LINEPINNNKNNKNNIP) the composition is skewed to low complexity. The segment at 81-100 (LINEPINNNKNNKNNIPKNH) is disordered. N-linked (GlcNAc...) asparagine glycosylation is found at Asn233, Asn322, and Asn426.

This sequence belongs to the glycosyltransferase 8 family. Highly divergent.

It localises to the membrane. This Dictyostelium discoideum (Social amoeba) protein is Glycosyltransferase-like protein gnt12 (gnt12).